The following is a 273-amino-acid chain: Light-independent protochlorophyllide reductase iron-sulfur ATP-binding protein (273 aa).

ATP contacts are provided by residues 12–17 and lysine 41; that span reads GIGKST. Mg(2+) is bound at residue serine 16. Residues cysteine 97 and cysteine 131 each coordinate [4Fe-4S] cluster. 182–183 is an ATP binding site; it reads NR.

It belongs to the NifH/BchL/ChlL family. In terms of assembly, homodimer. Protochlorophyllide reductase is composed of three subunits; BchL, BchN and BchB. Requires [4Fe-4S] cluster as cofactor.

It carries out the reaction chlorophyllide a + oxidized 2[4Fe-4S]-[ferredoxin] + 2 ADP + 2 phosphate = protochlorophyllide a + reduced 2[4Fe-4S]-[ferredoxin] + 2 ATP + 2 H2O. The protein operates within porphyrin-containing compound metabolism; bacteriochlorophyll biosynthesis (light-independent). Its function is as follows. Component of the dark-operative protochlorophyllide reductase (DPOR) that uses Mg-ATP and reduced ferredoxin to reduce ring D of protochlorophyllide (Pchlide) to form chlorophyllide a (Chlide). This reaction is light-independent. The L component serves as a unique electron donor to the NB-component of the complex, and binds Mg-ATP. This Roseiflexus sp. (strain RS-1) protein is Light-independent protochlorophyllide reductase iron-sulfur ATP-binding protein.